Reading from the N-terminus, the 943-residue chain is Leucine--tRNA ligase (943 aa).

The 'HIGH' region signature appears at 36-46; the sequence is PYPSGSMHVGH. Residues 623–627 carry the 'KMSKS' region motif; the sequence is KMSSS. Residues 910-943 are disordered; it reads ASEVVIHTDPEEAPGPEDRKAGARPLRPGIWLEE. Residues 915 to 930 are compositionally biased toward basic and acidic residues; sequence IHTDPEEAPGPEDRKA.

It belongs to the class-I aminoacyl-tRNA synthetase family.

Its subcellular location is the cytoplasm. It catalyses the reaction tRNA(Leu) + L-leucine + ATP = L-leucyl-tRNA(Leu) + AMP + diphosphate. This chain is Leucine--tRNA ligase, found in Methanopyrus kandleri (strain AV19 / DSM 6324 / JCM 9639 / NBRC 100938).